The primary structure comprises 138 residues: ATP synthase epsilon chain, chloroplastic (138 aa).

This sequence belongs to the ATPase epsilon chain family. F-type ATPases have 2 components, CF(1) - the catalytic core - and CF(0) - the membrane proton channel. CF(1) has five subunits: alpha(3), beta(3), gamma(1), delta(1), epsilon(1). CF(0) has three main subunits: a, b and c.

The protein localises to the plastid. It is found in the chloroplast thylakoid membrane. In terms of biological role, produces ATP from ADP in the presence of a proton gradient across the membrane. The sequence is that of ATP synthase epsilon chain, chloroplastic from Anthoceros angustus (Hornwort).